A 344-amino-acid polypeptide reads, in one-letter code: Golgi-associated RAB2 interactor protein 1B (344 aa).

This sequence belongs to the GARIN family.

It localises to the golgi apparatus. RAB2B effector protein required for accurate acrosome formation and normal male fertility. In complex with RAB2A/RAB2B, seems to suppress excessive vesicle trafficking during acrosome formation. This is Golgi-associated RAB2 interactor protein 1B (Garin1b) from Rattus norvegicus (Rat).